The sequence spans 31 residues: Photosystem II reaction center protein T (31 aa).

Residues Ala-3–Phe-23 form a helical membrane-spanning segment.

Belongs to the PsbT family. PSII is composed of 1 copy each of membrane proteins PsbA, PsbB, PsbC, PsbD, PsbE, PsbF, PsbH, PsbI, PsbJ, PsbK, PsbL, PsbM, PsbT, PsbX, PsbY, PsbZ, Psb30/Ycf12, at least 3 peripheral proteins of the oxygen-evolving complex and a large number of cofactors. It forms dimeric complexes.

The protein resides in the plastid. Its subcellular location is the chloroplast thylakoid membrane. Found at the monomer-monomer interface of the photosystem II (PS II) dimer, plays a role in assembly and dimerization of PSII. PSII is a light-driven water plastoquinone oxidoreductase, using light energy to abstract electrons from H(2)O, generating a proton gradient subsequently used for ATP formation. The polypeptide is Photosystem II reaction center protein T (Pyropia yezoensis (Susabi-nori)).